The chain runs to 255 residues: tRNA pseudouridine synthase A (255 aa).

Residue Asp-43 is the Nucleophile of the active site. Position 94 (Tyr-94) interacts with substrate.

It belongs to the tRNA pseudouridine synthase TruA family.

The enzyme catalyses uridine(38/39/40) in tRNA = pseudouridine(38/39/40) in tRNA. Formation of pseudouridine at positions 38, 39 and 40 in the anticodon stem and loop of transfer RNAs. The chain is tRNA pseudouridine synthase A from Pyrobaculum neutrophilum (strain DSM 2338 / JCM 9278 / NBRC 100436 / V24Sta) (Thermoproteus neutrophilus).